Consider the following 507-residue polypeptide: Alkyl hydroperoxide reductase subunit F (507 aa).

Position 207–222 (Asp207–Ile222) interacts with FAD. A disulfide bridge links Cys335 with Cys338. Asp347–Ala361 contributes to the NAD(+) binding site. Residue Thr467–Asp477 coordinates FAD.

Belongs to the class-II pyridine nucleotide-disulfide oxidoreductase family. Homodimer. It depends on FAD as a cofactor.

Serves to protect the cell against DNA damage by alkyl hydroperoxides. It can use either NADH or NADPH as electron donor for direct reduction of redox dyes or of alkyl hydroperoxides when combined with the AhpC protein. The sequence is that of Alkyl hydroperoxide reductase subunit F (ahpF) from Staphylococcus aureus (strain MSSA476).